Consider the following 119-residue polypeptide: Beta-2-microglobulin (119 aa).

An N-terminal signal peptide occupies residues 1 to 20; sequence MARFVVVALLVQLSLFGLEA. One can recognise an Ig-like C1-type domain in the interval 25 to 114; sequence PKIQVYSRYP…VTFSTPKTVK (90 aa). A disulfide bridge connects residues C45 and C100.

This sequence belongs to the beta-2-microglobulin family. In terms of assembly, heterodimer of an alpha chain and a beta chain. Beta-2-microglobulin is the beta-chain of major histocompatibility complex class I molecules.

Its subcellular location is the secreted. Functionally, component of the class I major histocompatibility complex (MHC). Involved in the presentation of peptide antigens to the immune system. The sequence is that of Beta-2-microglobulin (B2M) from Saguinus imperator (Emperor tamarin).